The following is a 346-amino-acid chain: Cyclin-dependent kinase 20 (346 aa).

Positions 4 to 288 (YCILGRIGEG…ASKALLHQYF (285 aa)) constitute a Protein kinase domain. ATP is bound by residues 10–18 (IGEGAHGIV) and K33. Residue D127 is the Proton acceptor of the active site.

It belongs to the protein kinase superfamily. CMGC Ser/Thr protein kinase family. CDC2/CDKX subfamily. Monomer. Interacts with TBC1D32. Interacts with MAK.

It is found in the nucleus. The protein resides in the cytoplasm. The protein localises to the cell projection. It localises to the cilium. The enzyme catalyses L-seryl-[protein] + ATP = O-phospho-L-seryl-[protein] + ADP + H(+). It carries out the reaction L-threonyl-[protein] + ATP = O-phospho-L-threonyl-[protein] + ADP + H(+). Functionally, required for high-level Shh responses in the developing neural tube. Together with TBC1D32, controls the structure of the primary cilium by coordinating assembly of the ciliary membrane and axoneme, allowing GLI2 to be properly activated in response to SHH signaling. Involved in cell growth. Activates CDK2, a kinase involved in the control of the cell cycle, by phosphorylating residue 'Thr-160'. This is Cyclin-dependent kinase 20 (CDK20) from Homo sapiens (Human).